The following is a 673-amino-acid chain: DNA ligase (673 aa).

NAD(+) contacts are provided by residues 38–42 (DSVYD), 87–88 (SL), and Glu119. Lys121 functions as the N6-AMP-lysine intermediate in the catalytic mechanism. 4 residues coordinate NAD(+): Arg142, Glu179, Lys296, and Lys320. 4 residues coordinate Zn(2+): Cys414, Cys417, Cys432, and Cys438. Residues 595–673 (VVKSEIAGKT…EEAFLKLLKS (79 aa)) form the BRCT domain.

Belongs to the NAD-dependent DNA ligase family. LigA subfamily. Mg(2+) serves as cofactor. Requires Mn(2+) as cofactor.

It carries out the reaction NAD(+) + (deoxyribonucleotide)n-3'-hydroxyl + 5'-phospho-(deoxyribonucleotide)m = (deoxyribonucleotide)n+m + AMP + beta-nicotinamide D-nucleotide.. DNA ligase that catalyzes the formation of phosphodiester linkages between 5'-phosphoryl and 3'-hydroxyl groups in double-stranded DNA using NAD as a coenzyme and as the energy source for the reaction. It is essential for DNA replication and repair of damaged DNA. The sequence is that of DNA ligase from Coxiella burnetii (strain RSA 493 / Nine Mile phase I).